We begin with the raw amino-acid sequence, 216 residues long: Large ribosomal subunit protein uL3 (216 aa).

Residues 133–145 show a composition bias toward polar residues; sequence GRATHGNSRSHNV. A disordered region spans residues 133-153; sequence GRATHGNSRSHNVPGSIGMAQ. Glutamine 153 carries the post-translational modification N5-methylglutamine.

This sequence belongs to the universal ribosomal protein uL3 family. As to quaternary structure, part of the 50S ribosomal subunit. Forms a cluster with proteins L14 and L19. In terms of processing, methylated by PrmB.

One of the primary rRNA binding proteins, it binds directly near the 3'-end of the 23S rRNA, where it nucleates assembly of the 50S subunit. The polypeptide is Large ribosomal subunit protein uL3 (Burkholderia cenocepacia (strain ATCC BAA-245 / DSM 16553 / LMG 16656 / NCTC 13227 / J2315 / CF5610) (Burkholderia cepacia (strain J2315))).